Reading from the N-terminus, the 1019-residue chain is Vacuolar membrane protease (1019 aa).

Residues 1–69 (MFLEINFYST…DRIPTVVGFR (69 aa)) are Cytoplasmic-facing. A helical membrane pass occupies residues 70-90 (VIPTTVLVLLTYLTIFTLVIV). The Vacuolar portion of the chain corresponds to 91 to 404 (TDWLPEPPKN…AELVIFYLND (314 aa)). Asn-158 carries an N-linked (GlcNAc...) asparagine glycan. Zn(2+)-binding residues include His-195 and Asp-207. Glu-239 serves as the catalytic Proton acceptor. Glu-240 is a binding site for Zn(2+). The N-linked (GlcNAc...) asparagine glycan is linked to Asn-256. The Zn(2+) site is built by Glu-265 and His-341. A helical transmembrane segment spans residues 405–425 (LLIYNVVSLVVGPISLIFFVV). At 426–466 (CEYVLRNERARQPNGHPVSRPSVLEWLKQRSWLRALWRRSK) the chain is on the cytoplasmic side. The helical transmembrane segment at 467–487 (FWIALVITIALQALLVWGYLA) threads the bilayer. The Vacuolar portion of the chain corresponds to 488–497 (FNSFTVYSSP). The helical transmembrane segment at 498-518 (YLVLISFFSLAYLSLVIPLTF) threads the bilayer. Residues 519 to 539 (TFNQTQSPTAKYIAPEREKHT) lie on the Cytoplasmic side of the membrane. Residues 540–560 (LLIQVYIFTWILLLFSTIAVA) traverse the membrane as a helical segment. Over 561–565 (RAQVG) the chain is Vacuolar. The helical transmembrane segment at 566–586 (GLYFVTAWNTGVWIACLLAAV) threads the bilayer. The Cytoplasmic portion of the chain corresponds to 587-651 (EGMMLPVPQG…ASLRKPQEGG (65 aa)). Positions 603–634 (HSAHHHHHHEHEEDQDADDDDREQRQPPTEAT) are disordered. Residues 652–672 (VVGWWIVHLLLTIPAPVLLIA) form a helical membrane-spanning segment. Topologically, residues 673–692 (QMGSLLLDSLPQTLADGSPA) are vacuolar. The helical transmembrane segment at 693-713 (YVVYAAASLTAVLLAVPLTPF) threads the bilayer. Residues 714-719 (SGKLHR) are Cytoplasmic-facing. The chain crosses the membrane as a helical span at residues 720-740 (GLFFLFFLSFLIVTAYLWLAF). The Vacuolar portion of the chain corresponds to 741-1019 (PFSSADPLKV…LVEAWSPFSV (279 aa)). Asn-774 carries N-linked (GlcNAc...) asparagine glycosylation.

It belongs to the peptidase M28 family. Requires Zn(2+) as cofactor.

It localises to the vacuole membrane. In terms of biological role, may be involved in vacuolar sorting and osmoregulation. In Laccaria bicolor (strain S238N-H82 / ATCC MYA-4686) (Bicoloured deceiver), this protein is Vacuolar membrane protease.